We begin with the raw amino-acid sequence, 682 residues long: K(+)-insensitive pyrophosphate-energized proton pump 2 (682 aa).

5 helical membrane-spanning segments follow: residues 1-21, 56-76, 78-98, 130-150, and 160-180; these read MELF…ALYM, TIAG…RQYH, AVAF…GMYV, LAVT…FGGA, and IVGF…SGGI. Lys-183 is a substrate binding site. Positions 186, 190, and 216 each coordinate Mg(2+). 7 helical membrane passes run 237 to 257, 258 to 278, 291 to 311, 318 to 338, 353 to 373, 375 to 395, and 404 to 424; these read IGAM…GIVF, PLVA…FVRA, GYIV…RYML, FIYF…FVLI, IARA…AVGF, STAL…WLGL, and LYGT…ILAM. Mg(2+) is bound at residue Asp-432. A run of 4 helical transmembrane segments spans residues 468–488, 506–526, 574–594, and 595–615; these read YAIG…IDEV, EVFV…STAI, MVLP…VLKA, and EAAA…ALFL. Residues Asp-623, Asp-649, and Asp-653 each coordinate Ca(2+). Lys-656 contacts substrate. A helical transmembrane segment spans residues 662–682; it reads SLHVLVKLISTITLVLAGLFI.

It belongs to the H(+)-translocating pyrophosphatase (TC 3.A.10) family. K(+)-insensitive subfamily. As to quaternary structure, homodimer. Requires Mg(2+) as cofactor.

It is found in the cell membrane. It carries out the reaction diphosphate + H2O + H(+)(in) = 2 phosphate + 2 H(+)(out). Functionally, proton pump that utilizes the energy of pyrophosphate hydrolysis as the driving force for proton movement across the membrane. Generates a proton motive force. The protein is K(+)-insensitive pyrophosphate-energized proton pump 2 of Moorella thermoacetica (strain ATCC 39073 / JCM 9320).